Here is a 194-residue protein sequence, read N- to C-terminus: Glycerol-3-phosphate acyltransferase 2 (194 aa).

Helical transmembrane passes span 1-21, 64-84, 112-132, 135-155, and 156-173; these read MWLL…AYVV, VLAV…LAAL, LAMA…VVIF, YISL…IYFH, and RPWP…LVIY.

The protein belongs to the PlsY family. In terms of assembly, probably interacts with PlsX.

It localises to the cell membrane. The enzyme catalyses an acyl phosphate + sn-glycerol 3-phosphate = a 1-acyl-sn-glycero-3-phosphate + phosphate. Its pathway is lipid metabolism; phospholipid metabolism. Catalyzes the transfer of an acyl group from acyl-phosphate (acyl-PO(4)) to glycerol-3-phosphate (G3P) to form lysophosphatidic acid (LPA). This enzyme utilizes acyl-phosphate as fatty acyl donor, but not acyl-CoA or acyl-ACP. This Moorella thermoacetica (strain ATCC 39073 / JCM 9320) protein is Glycerol-3-phosphate acyltransferase 2.